Here is a 150-residue protein sequence, read N- to C-terminus: Urease accessory protein UreE (150 aa).

This sequence belongs to the UreE family.

It is found in the cytoplasm. Its function is as follows. Involved in urease metallocenter assembly. Binds nickel. Probably functions as a nickel donor during metallocenter assembly. This chain is Urease accessory protein UreE, found in Parasynechococcus marenigrum (strain WH8102).